Reading from the N-terminus, the 377-residue chain is Queuine tRNA-ribosyltransferase (377 aa).

Residue aspartate 89 is the Proton acceptor of the active site. Substrate is bound by residues 89–93, aspartate 143, glutamine 187, and glycine 214; that span reads DSGGF. The interval 245–251 is RNA binding; that stretch reads GVGKPED. Residue aspartate 264 is the Nucleophile of the active site. Residues 269 to 273 are RNA binding; important for wobble base 34 recognition; the sequence is TRNAR. Residues cysteine 302, cysteine 304, cysteine 307, and histidine 333 each coordinate Zn(2+).

It belongs to the queuine tRNA-ribosyltransferase family. Homodimer. Within each dimer, one monomer is responsible for RNA recognition and catalysis, while the other monomer binds to the replacement base PreQ1. It depends on Zn(2+) as a cofactor.

It catalyses the reaction 7-aminomethyl-7-carbaguanine + guanosine(34) in tRNA = 7-aminomethyl-7-carbaguanosine(34) in tRNA + guanine. The protein operates within tRNA modification; tRNA-queuosine biosynthesis. Catalyzes the base-exchange of a guanine (G) residue with the queuine precursor 7-aminomethyl-7-deazaguanine (PreQ1) at position 34 (anticodon wobble position) in tRNAs with GU(N) anticodons (tRNA-Asp, -Asn, -His and -Tyr). Catalysis occurs through a double-displacement mechanism. The nucleophile active site attacks the C1' of nucleotide 34 to detach the guanine base from the RNA, forming a covalent enzyme-RNA intermediate. The proton acceptor active site deprotonates the incoming PreQ1, allowing a nucleophilic attack on the C1' of the ribose to form the product. After dissociation, two additional enzymatic reactions on the tRNA convert PreQ1 to queuine (Q), resulting in the hypermodified nucleoside queuosine (7-(((4,5-cis-dihydroxy-2-cyclopenten-1-yl)amino)methyl)-7-deazaguanosine). This chain is Queuine tRNA-ribosyltransferase, found in Shewanella sediminis (strain HAW-EB3).